Consider the following 499-residue polypeptide: Glucosylglycerol-phosphate synthase (499 aa).

The protein belongs to the glycosyltransferase 20 family. In terms of assembly, interacts with GGP-P. Seems to be degraded, at least in vitro, by FtsH2. In an ftsH2 disruption strain inactive GGPS accumulates.

Its subcellular location is the cytoplasm. The catalysed reaction is ADP-alpha-D-glucose + sn-glycerol 3-phosphate = 2-O-(alpha-D-glucopyranosyl)-sn-glycerol 3-phosphate + ADP + H(+). The protein operates within glycan metabolism; glucosylglycerol biosynthesis. Involved in salt tolerance by producing GG-phosphate from ADP-glucose and glycerol-3-phosphate (G3P), an intermediate in the synthesis of the osmolyte glucosylglycerol (GG). The protein is Glucosylglycerol-phosphate synthase (ggpS) of Synechocystis sp. (strain ATCC 27184 / PCC 6803 / Kazusa).